Here is a 399-residue protein sequence, read N- to C-terminus: Phosphoglycerate kinase (399 aa).

Residues D21 to N23, R36, H59 to R62, R120, and R158 each bind substrate. Residues K209, G297, E328, and G355 to S358 each bind ATP.

The protein belongs to the phosphoglycerate kinase family. As to quaternary structure, monomer.

It localises to the cytoplasm. The enzyme catalyses (2R)-3-phosphoglycerate + ATP = (2R)-3-phospho-glyceroyl phosphate + ADP. Its pathway is carbohydrate degradation; glycolysis; pyruvate from D-glyceraldehyde 3-phosphate: step 2/5. In Streptococcus thermophilus (strain ATCC BAA-250 / LMG 18311), this protein is Phosphoglycerate kinase.